Consider the following 476-residue polypeptide: Bifunctional protein HldE (476 aa).

A ribokinase region spans residues 1–318 (MLSKKPNILV…EYESSLHKSN (318 aa)). Residue 195 to 198 (NKKE) coordinates ATP. The active site involves D263. Positions 345 to 476 (FTNGCFDILH…RIQENEKCNN (132 aa)) are cytidylyltransferase.

This sequence in the N-terminal section; belongs to the carbohydrate kinase PfkB family. It in the C-terminal section; belongs to the cytidylyltransferase family. Homodimer.

It carries out the reaction D-glycero-beta-D-manno-heptose 7-phosphate + ATP = D-glycero-beta-D-manno-heptose 1,7-bisphosphate + ADP + H(+). The catalysed reaction is D-glycero-beta-D-manno-heptose 1-phosphate + ATP + H(+) = ADP-D-glycero-beta-D-manno-heptose + diphosphate. It functions in the pathway nucleotide-sugar biosynthesis; ADP-L-glycero-beta-D-manno-heptose biosynthesis; ADP-L-glycero-beta-D-manno-heptose from D-glycero-beta-D-manno-heptose 7-phosphate: step 1/4. The protein operates within nucleotide-sugar biosynthesis; ADP-L-glycero-beta-D-manno-heptose biosynthesis; ADP-L-glycero-beta-D-manno-heptose from D-glycero-beta-D-manno-heptose 7-phosphate: step 3/4. In terms of biological role, catalyzes the phosphorylation of D-glycero-D-manno-heptose 7-phosphate at the C-1 position to selectively form D-glycero-beta-D-manno-heptose-1,7-bisphosphate. Its function is as follows. Catalyzes the ADP transfer from ATP to D-glycero-beta-D-manno-heptose 1-phosphate, yielding ADP-D-glycero-beta-D-manno-heptose. The chain is Bifunctional protein HldE from Aliarcobacter butzleri (strain RM4018) (Arcobacter butzleri).